The sequence spans 380 residues: Cytochrome b (380 aa).

A run of 4 helical transmembrane segments spans residues 34 to 54 (FGSL…LLAM), 78 to 99 (WLIR…YLHI), 114 to 134 (WNTG…GYVL), and 179 to 199 (FFAL…IHLT). Heme b contacts are provided by histidine 84 and histidine 98. Positions 183 and 197 each coordinate heme b. Position 202 (histidine 202) interacts with a ubiquinone. The next 4 helical transmembrane spans lie at 227–247 (LKDI…ALFS), 289–309 (LGGV…PLLH), 321–341 (LSQL…WIGS), and 348–368 (FIII…ILFP).

It belongs to the cytochrome b family. In terms of assembly, the cytochrome bc1 complex contains 11 subunits: 3 respiratory subunits (MT-CYB, CYC1 and UQCRFS1), 2 core proteins (UQCRC1 and UQCRC2) and 6 low-molecular weight proteins (UQCRH/QCR6, UQCRB/QCR7, UQCRQ/QCR8, UQCR10/QCR9, UQCR11/QCR10 and a cleavage product of UQCRFS1). This cytochrome bc1 complex then forms a dimer. It depends on heme b as a cofactor.

It localises to the mitochondrion inner membrane. Its function is as follows. Component of the ubiquinol-cytochrome c reductase complex (complex III or cytochrome b-c1 complex) that is part of the mitochondrial respiratory chain. The b-c1 complex mediates electron transfer from ubiquinol to cytochrome c. Contributes to the generation of a proton gradient across the mitochondrial membrane that is then used for ATP synthesis. The sequence is that of Cytochrome b (MT-CYB) from Oceanodroma microsoma (Least storm petrel).